Reading from the N-terminus, the 328-residue chain is Biotin synthase (328 aa).

In terms of domain architecture, Radical SAM core spans 41–260 (TAIETASLLS…VALARILMPA (220 aa)). [4Fe-4S] cluster-binding residues include Cys56, Cys60, and Cys63. Residues Cys100, Cys131, Cys191, and Arg264 each contribute to the [2Fe-2S] cluster site.

The protein belongs to the radical SAM superfamily. Biotin synthase family. In terms of assembly, homodimer. It depends on [4Fe-4S] cluster as a cofactor. [2Fe-2S] cluster serves as cofactor.

The enzyme catalyses (4R,5S)-dethiobiotin + (sulfur carrier)-SH + 2 reduced [2Fe-2S]-[ferredoxin] + 2 S-adenosyl-L-methionine = (sulfur carrier)-H + biotin + 2 5'-deoxyadenosine + 2 L-methionine + 2 oxidized [2Fe-2S]-[ferredoxin]. It functions in the pathway cofactor biosynthesis; biotin biosynthesis; biotin from 7,8-diaminononanoate: step 2/2. In terms of biological role, catalyzes the conversion of dethiobiotin (DTB) to biotin by the insertion of a sulfur atom into dethiobiotin via a radical-based mechanism. The polypeptide is Biotin synthase (Cereibacter sphaeroides (strain ATCC 17023 / DSM 158 / JCM 6121 / CCUG 31486 / LMG 2827 / NBRC 12203 / NCIMB 8253 / ATH 2.4.1.) (Rhodobacter sphaeroides)).